The sequence spans 164 residues: 3-isopropylmalate dehydratase small subunit (164 aa).

Belongs to the LeuD family. LeuD type 2 subfamily. As to quaternary structure, heterodimer of LeuC and LeuD.

It catalyses the reaction (2R,3S)-3-isopropylmalate = (2S)-2-isopropylmalate. It participates in amino-acid biosynthesis; L-leucine biosynthesis; L-leucine from 3-methyl-2-oxobutanoate: step 2/4. Functionally, catalyzes the isomerization between 2-isopropylmalate and 3-isopropylmalate, via the formation of 2-isopropylmaleate. This chain is 3-isopropylmalate dehydratase small subunit, found in Syntrophus aciditrophicus (strain SB).